The primary structure comprises 888 residues: Kinesin-like protein KIF20A (888 aa).

Ser2 is subject to N-acetylserine. Residues Ser7, Ser14, and Ser21 each carry the phosphoserine modification. Residues 63–506 (KVKVYLRVRP…AKFSAIASQL (444 aa)) enclose the Kinesin motor domain. 159 to 166 (GVTNSGKT) serves as a coordination point for ATP. Phosphoserine; by PLK1 is present on Ser527. Residue Ser531 is modified to Phosphoserine. Coiled coils occupy residues 559-587 (KEEL…EVQL) and 630-760 (ESLT…ERAC). Phosphoserine is present on residues Ser667, Ser683, and Ser823. Residues 761–888 (CHNTGAGKLR…LKSGPFGKKY (128 aa)) are globular. A disordered region spans residues 823–863 (STKKRLGANQENQQPNQQPPGKKPFLRNLLPRTPTCQSSTD). Thr855 bears the Phosphothreonine mark. Residues Ser865, Ser876, and Ser881 each carry the phosphoserine modification.

The protein belongs to the TRAFAC class myosin-kinesin ATPase superfamily. Kinesin family. Phosphorylated by PLK1 at Ser-527 during mitosis, creating a docking site for PLK1 and recruiting PLK1 at central spindle.

Its subcellular location is the golgi apparatus. The protein localises to the cytoplasm. It is found in the cytoskeleton. The protein resides in the spindle. Functionally, mitotic kinesin required for chromosome passenger complex (CPC)-mediated cytokinesis. Following phosphorylation by PLK1, involved in recruitment of PLK1 to the central spindle. Interacts with guanosine triphosphate (GTP)-bound forms of RAB6A and RAB6B. May act as a motor required for the retrograde RAB6 regulated transport of Golgi membranes and associated vesicles along microtubules. Has a microtubule plus end-directed motility. The sequence is that of Kinesin-like protein KIF20A (KIF20A) from Bos taurus (Bovine).